A 360-amino-acid polypeptide reads, in one-letter code: uncharacterized protein (360 aa).

6 helical membrane passes run 12 to 32 (ILPLLIIVTFSVTSIVWITQI), 52 to 72 (VVLVLPTLLFILLPIITVIAV), 96 to 116 (IQLALPALYVALTIMLLAYYI), 278 to 298 (IIWPLYNFVLPCLALAVFLRY), 306 to 326 (FMPVLFSALTVLFVTAIHFIL), and 336 to 356 (FIFACYFNLLVALTIGLYLLV).

Its subcellular location is the cell membrane. This is an uncharacterized protein from Rickettsia prowazekii (strain Madrid E).